We begin with the raw amino-acid sequence, 353 residues long: (-)-beta-caryophyllene synthase ((2E,6E)-farnesyl diphosphate cyclizing) (353 aa).

Mg(2+)-binding residues include D85 and D89. A DDXXD motif motif is present at residues 85–89; it reads DDQFD. Residue R179 coordinates substrate. Mg(2+)-binding residues include N225 and S229. K232 contacts substrate. E233 contributes to the Mg(2+) binding site. 320 to 321 provides a ligand contact to substrate; the sequence is RF.

The protein belongs to the terpene synthase family. It depends on Mg(2+) as a cofactor.

It catalyses the reaction (2E,6E)-farnesyl diphosphate = (-)-(E)-beta-caryophyllene + diphosphate. It functions in the pathway secondary metabolite biosynthesis; terpenoid biosynthesis. Its function is as follows. Catalyzes the conversion of (2E,6E)-farnesyl diphosphate (FPP) to yield the bicyclic sesquiterpene (2S,10R)-(-)-(E)-beta-caryophyllene via a probable 1,10-cyclization, which could involve the abstraction of the pyrophosphate from FPP to yield a (E,E)-germacradienyl cation. The sequence is that of (-)-beta-caryophyllene synthase ((2E,6E)-farnesyl diphosphate cyclizing) (ptlA) from Saccharothrix espanaensis (strain ATCC 51144 / DSM 44229 / JCM 9112 / NBRC 15066 / NRRL 15764).